A 457-amino-acid polypeptide reads, in one-letter code: Serine--tRNA ligase (457 aa).

Residue Thr-252 to Glu-254 participates in L-serine binding. Residues Arg-283–Glu-285 and Val-299 contribute to the ATP site. Glu-306 lines the L-serine pocket. Residue Glu-370–Ser-373 participates in ATP binding. Thr-406 serves as a coordination point for L-serine.

The protein belongs to the class-II aminoacyl-tRNA synthetase family. Type-1 seryl-tRNA synthetase subfamily. As to quaternary structure, homodimer. The tRNA molecule binds across the dimer.

Its subcellular location is the cytoplasm. It carries out the reaction tRNA(Ser) + L-serine + ATP = L-seryl-tRNA(Ser) + AMP + diphosphate + H(+). The enzyme catalyses tRNA(Sec) + L-serine + ATP = L-seryl-tRNA(Sec) + AMP + diphosphate + H(+). It functions in the pathway aminoacyl-tRNA biosynthesis; selenocysteinyl-tRNA(Sec) biosynthesis; L-seryl-tRNA(Sec) from L-serine and tRNA(Sec): step 1/1. Its function is as follows. Catalyzes the attachment of serine to tRNA(Ser). Is also able to aminoacylate tRNA(Sec) with serine, to form the misacylated tRNA L-seryl-tRNA(Sec), which will be further converted into selenocysteinyl-tRNA(Sec). This chain is Serine--tRNA ligase, found in Saccharolobus islandicus (strain M.14.25 / Kamchatka #1) (Sulfolobus islandicus).